The chain runs to 283 residues: Phosphatidylglycerol--prolipoprotein diacylglyceryl transferase (283 aa).

The next 7 membrane-spanning stretches (helical) occupy residues 21–41 (LAVRWYGLMYLFGFMFALWLA), 60–80 (LLFAGFLGVVIGGRVGYVLFY), 95–115 (VWTGGMSFHGGLLGVISAMLW), 124–144 (FFTIADFVAPLVPFGLGAGRL), 176–196 (SQLYEFALEGVVLFFILNWFI), 203–223 (GAVSGLFLFGYGTFRFLVEYV), and 239–259 (MGQILSLPMVIGGLLMMLWAF). Residue arginine 143 participates in a 1,2-diacyl-sn-glycero-3-phospho-(1'-sn-glycerol) binding.

It belongs to the Lgt family.

Its subcellular location is the cell inner membrane. It catalyses the reaction L-cysteinyl-[prolipoprotein] + a 1,2-diacyl-sn-glycero-3-phospho-(1'-sn-glycerol) = an S-1,2-diacyl-sn-glyceryl-L-cysteinyl-[prolipoprotein] + sn-glycerol 1-phosphate + H(+). It functions in the pathway protein modification; lipoprotein biosynthesis (diacylglyceryl transfer). Its function is as follows. Catalyzes the transfer of the diacylglyceryl group from phosphatidylglycerol to the sulfhydryl group of the N-terminal cysteine of a prolipoprotein, the first step in the formation of mature lipoproteins. The chain is Phosphatidylglycerol--prolipoprotein diacylglyceryl transferase from Aliivibrio fischeri (strain MJ11) (Vibrio fischeri).